The sequence spans 510 residues: Chromosomal replication initiator protein DnaA (510 aa).

The tract at residues 1–87 (MSVELWQQCV…IGSRRSSAPR (87 aa)) is domain I, interacts with DnaA modulators. Residues 87-173 (RAAPNAPVSA…QVEGALKHTS (87 aa)) are domain II. Residues 140 to 160 (DSFDAMAEPASAPASSGRAEQ) form a disordered region. The span at 144–157 (AMAEPASAPASSGR) shows a compositional bias: low complexity. Positions 174–390 (YLNRTFTFDT…GALKRVIAHS (217 aa)) are domain III, AAA+ region. Residues G218, G220, K221, and T222 each coordinate ATP. The interval 391-510 (HFMGRDITIE…YKNLLRTLTT (120 aa)) is domain IV, binds dsDNA.

Belongs to the DnaA family. Oligomerizes as a right-handed, spiral filament on DNA at oriC.

It is found in the cytoplasm. Its function is as follows. Plays an essential role in the initiation and regulation of chromosomal replication. ATP-DnaA binds to the origin of replication (oriC) to initiate formation of the DNA replication initiation complex once per cell cycle. Binds the DnaA box (a 9 base pair repeat at the origin) and separates the double-stranded (ds)DNA. Forms a right-handed helical filament on oriC DNA; dsDNA binds to the exterior of the filament while single-stranded (ss)DNA is stabiized in the filament's interior. The ATP-DnaA-oriC complex binds and stabilizes one strand of the AT-rich DNA unwinding element (DUE), permitting loading of DNA polymerase. After initiation quickly degrades to an ADP-DnaA complex that is not apt for DNA replication. Binds acidic phospholipids. The polypeptide is Chromosomal replication initiator protein DnaA (Pseudomonas putida (strain GB-1)).